A 263-amino-acid polypeptide reads, in one-letter code: Small ribosomal subunit protein uS3 (263 aa).

The region spanning 39–107 is the KH type-2 domain; that stretch reads VREYLKKKLK…PVHVNIEEIR (69 aa). The disordered stretch occupies residues 211-263; that stretch reads GELPPEAATPREEERRPRRAPRGDRPDGARTGRPGGRGRGPRKADAAPAPEGE. Residues 219–240 are compositionally biased toward basic and acidic residues; it reads TPREEERRPRRAPRGDRPDGAR.

The protein belongs to the universal ribosomal protein uS3 family. As to quaternary structure, part of the 30S ribosomal subunit. Forms a tight complex with proteins S10 and S14.

In terms of biological role, binds the lower part of the 30S subunit head. Binds mRNA in the 70S ribosome, positioning it for translation. In Bordetella pertussis (strain Tohama I / ATCC BAA-589 / NCTC 13251), this protein is Small ribosomal subunit protein uS3.